A 965-amino-acid chain; its full sequence is Fibronectin-binding protein A (965 aa).

The first 36 residues, 1-36 (MKNNLRYGIRKHKLGAASVFLGTMIVIGMGQDKEAA), serve as a signal peptide directing secretion. The YSIRK-G/S signaling motif motif lies at 7–18 (YGIRKHKLGAAS). The disordered stretch occupies residues 37 to 206 (ASEQKTTTVE…VTSKVTVEDE (170 aa)). Positions 37-514 (ASEQKTTTVE…SNKANGDGKY (478 aa)) are ligand-binding A region. Residues 39–55 (EQKTTTVEENGNSATDN) show a composition bias toward polar residues. Positions 59–74 (ETQTTTTNVNTIDETQ) are enriched in low complexity. The segment covering 75–92 (SYSATATEQPSNATQVTT) has biased composition (polar residues). Over residues 112 to 122 (TVKEEVVKEEA) the composition is skewed to basic and acidic residues. Residues 126–139 (VKETTQSQDNSGDQ) are compositionally biased toward polar residues. Residues 179–193 (DVAEAKEASDAKVET) are compositionally biased toward basic and acidic residues. A fibrinogen/elastin/tropoelastin-binding region spans residues 194–514 (GTDVTSKVTV…SNKANGDGKY (321 aa)). The fibronectin-binding stretch occupies residues 515–837 (GPIVDSNNFE…EGQQTIEEDT (323 aa)). One copy of the B-1 repeat lies at 548 to 577 (ENQDNTPLDIDYHTAIDGEGGYVDGYIETI). The interval 548 to 607 (ENQDNTPLDIDYHTAIDGEGGYVDGYIETIEETDSSAIDIDYHTAVDSEAGHVGGYTESS) is 2 X approximate tandem repeats. A B-2 repeat occupies 578–607 (EETDSSAIDIDYHTAVDSEAGHVGGYTESS). 4 disordered regions span residues 598–625 (GHVGGYTESSEESNPIDFEESTHENSKH), 743–774 (LGYEGGQNSGNQSFEEDTEEDKPKYEQGGNII), 794–903 (IEED…GKVV), and 916–942 (VAPTKQKQAKKSELPETGGEESTNKGM). The stretch at 748-770 (GQNSGNQSFEEDTEEDKPKYEQG) is one D-1; truncated repeat. The segment at 748-839 (GQNSGNQSFE…QQTIEEDTTP (92 aa)) is 4 X approximate tandem repeats. Residues 771–785 (GNIIDIDFDSVPQIH) form a D-2; truncated repeat. One copy of the D-3 repeat lies at 786–824 (GFNKHNEIIEEDTNKDKPNYQFGGHNSVDFEEDTLPKVS). Residues 794–803 (IEEDTNKDKP) are compositionally biased toward basic and acidic residues. A D-4; truncated repeat occupies 825-839 (GQNEGQQTIEEDTTP). The segment covering 839 to 885 (PPTPPTPEVPSEPGTPTPPTPEVPSEPGKPTPPTPEVPAEPGKPVPP) has biased composition (pro residues). 4 WR repeats span residues 840-853 (PTPPTPEVPSEPGT), 854-867 (PTPPTPEVPSEPGK), 868-881 (PTPPTPEVPAEPGK), and 882-895 (PVPPAKEEPKKPSK). The segment at 840-895 (PTPPTPEVPSEPGTPTPPTPEVPSEPGKPTPPTPEVPAEPGKPVPPAKEEPKKPSK) is 4 X tandem repeats, Pro-rich (WR). The short motif at 929–933 (LPETG) is the LPXTG sorting signal element. The residue at position 932 (Thr932) is a Pentaglycyl murein peptidoglycan amidated threonine. Positions 933-965 (GGEESTNKGMLFGGLFSILGLALLRRNKKNHKA) are cleaved as a propeptide — removed by sortase.

Its subcellular location is the secreted. The protein localises to the cell wall. Its function is as follows. Promotes bacterial attachment to multiple substrates, such as fibronectin (Fn), fibrinogen (Fg), elastin peptides and tropoelastin. This confers to S.aureus the ability to invade endothelial cells. Promotes adherence to and aggregation of activated platelets. The chain is Fibronectin-binding protein A (fnbA) from Staphylococcus aureus (strain MRSA252).